The primary structure comprises 279 residues: Pantothenate synthetase (279 aa).

26-33 (MGGLHEGH) provides a ligand contact to ATP. Histidine 33 functions as the Proton donor in the catalytic mechanism. Glutamine 57 is a binding site for (R)-pantoate. Residue glutamine 57 coordinates beta-alanine. Position 143-146 (143-146 (GKKD)) interacts with ATP. Glutamine 149 lines the (R)-pantoate pocket. ATP-binding positions include valine 172 and 180–183 (LSSR).

Belongs to the pantothenate synthetase family. As to quaternary structure, homodimer.

The protein localises to the cytoplasm. The catalysed reaction is (R)-pantoate + beta-alanine + ATP = (R)-pantothenate + AMP + diphosphate + H(+). It participates in cofactor biosynthesis; (R)-pantothenate biosynthesis; (R)-pantothenate from (R)-pantoate and beta-alanine: step 1/1. In terms of biological role, catalyzes the condensation of pantoate with beta-alanine in an ATP-dependent reaction via a pantoyl-adenylate intermediate. This is Pantothenate synthetase from Nitrosospira multiformis (strain ATCC 25196 / NCIMB 11849 / C 71).